Reading from the N-terminus, the 837-residue chain is Zinc fingers and homeoboxes protein 2 (837 aa).

Residues 1 to 41 (MASKRKSTTPCMVRTSQVVEQDVPEEVDRAKEKGIGTPQPD) are disordered. The tract at residues 27-77 (VDRAKEKGIGTPQPDVAKDCWAAELENSSKENEVIEVKSMGESQSKKLQGG) is interaction with EFNB1. Position 37 is a phosphothreonine (T37). K64 participates in a covalent cross-link: Glycyl lysine isopeptide (Lys-Gly) (interchain with G-Cter in SUMO2). C2H2-type zinc fingers lie at residues 78–101 (YECKYCPYSTQNLNEFTEHVDMQH) and 110–133 (YVCAECNFTTKKYDSLSDHNSKFH). Over residues 167–180 (TSGPGTGDSDSGIS) the composition is skewed to low complexity. Residues 167-203 (TSGPGTGDSDSGISVSKTPIMKPGKPKADAKKVPKKP) are disordered. Residues 192-203 (PKADAKKVPKKP) show a composition bias toward basic and acidic residues. The tract at residues 195–358 (DAKKVPKKPE…PAQLAPTKVT (164 aa)) is required for homodimerization. 4 consecutive DNA-binding regions (homeobox) follow at residues 263–324 (NTTK…WSPE), 439–501 (TPAS…IVHI), 530–591 (PQKF…EQAV), and 628–690 (SPSP…TVKW). The required for repressor activity stretch occupies residues 263–446 (NTTKYNSALD…PLTPASDRKK (184 aa)). A required for interaction with NFYA region spans residues 263–497 (NTTKYNSALD…SDHRYRCQRG (235 aa)). The tract at residues 317-446 (HGISWSPEEV…PLTPASDRKK (130 aa)) is required for nuclear localization. The segment at 404-445 (GQKRPLVTPQAAPEPKRPHIAQVPEPPPKVANPPLTPASDRK) is disordered. The segment covering 427 to 439 (PEPPPKVANPPLT) has biased composition (pro residues). Residue K455 forms a Glycyl lysine isopeptide (Lys-Gly) (interchain with G-Cter in SUMO2) linkage. Residues 754 to 837 (EPAKDCLPAK…DCVPAEAGQA (84 aa)) form a disordered region. A phosphoserine mark is found at S825 and S827.

This sequence belongs to the ZHX family. As to quaternary structure, homodimer (via homeobox domain 1). Heterodimer with ZHX1 (via homeobox domain 1). Heterodimer with ZHX3 (via homeobox domain 1). Heterodimerization with ZHX1 is not necessary for repressor activity. Interacts (via homeobox domain) with NFYA (via N-terminus). Interacts with EFNB1 intracellular domain peptide; the interaction enhances ZHX2 transcriptional repression activity.

It is found in the nucleus. Acts as a transcriptional repressor. Represses the promoter activity of the CDC25C gene stimulated by NFYA. May play a role in retinal development where it regulates the composition of bipolar cell populations, by promoting differentiation of bipolar OFF-type cells. In the brain, may promote maintenance and suppress differentiation of neural progenitor cells in the developing cortex. The protein is Zinc fingers and homeoboxes protein 2 (ZHX2) of Pongo abelii (Sumatran orangutan).